Reading from the N-terminus, the 167-residue chain is ATP synthase subunit b (167 aa).

The helical transmembrane segment at 9–29 (ALPLGNMLFIIIAFLLLMLIL) threads the bilayer.

The protein belongs to the ATPase B chain family. As to quaternary structure, F-type ATPases have 2 components, F(1) - the catalytic core - and F(0) - the membrane proton channel. F(1) has five subunits: alpha(3), beta(3), gamma(1), delta(1), epsilon(1). F(0) has three main subunits: a(1), b(2) and c(10-14). The alpha and beta chains form an alternating ring which encloses part of the gamma chain. F(1) is attached to F(0) by a central stalk formed by the gamma and epsilon chains, while a peripheral stalk is formed by the delta and b chains.

It localises to the cell membrane. Functionally, f(1)F(0) ATP synthase produces ATP from ADP in the presence of a proton or sodium gradient. F-type ATPases consist of two structural domains, F(1) containing the extramembraneous catalytic core and F(0) containing the membrane proton channel, linked together by a central stalk and a peripheral stalk. During catalysis, ATP synthesis in the catalytic domain of F(1) is coupled via a rotary mechanism of the central stalk subunits to proton translocation. Its function is as follows. Component of the F(0) channel, it forms part of the peripheral stalk, linking F(1) to F(0). This chain is ATP synthase subunit b, found in Leuconostoc mesenteroides subsp. mesenteroides (strain ATCC 8293 / DSM 20343 / BCRC 11652 / CCM 1803 / JCM 6124 / NCDO 523 / NBRC 100496 / NCIMB 8023 / NCTC 12954 / NRRL B-1118 / 37Y).